Here is a 430-residue protein sequence, read N- to C-terminus: Phosphomethylpyrimidine synthase (430 aa).

Residues asparagine 67, methionine 96, tyrosine 125, histidine 161, 183–185 (SRG), 224–227 (DALR), and glutamate 263 each bind substrate. Histidine 267 contacts Zn(2+). Substrate is bound at residue tyrosine 290. A Zn(2+)-binding site is contributed by histidine 331. [4Fe-4S] cluster is bound by residues cysteine 406, cysteine 409, and cysteine 413.

It belongs to the ThiC family. Homodimer. It depends on [4Fe-4S] cluster as a cofactor.

It catalyses the reaction 5-amino-1-(5-phospho-beta-D-ribosyl)imidazole + S-adenosyl-L-methionine = 4-amino-2-methyl-5-(phosphooxymethyl)pyrimidine + CO + 5'-deoxyadenosine + formate + L-methionine + 3 H(+). The protein operates within cofactor biosynthesis; thiamine diphosphate biosynthesis. Its function is as follows. Catalyzes the synthesis of the hydroxymethylpyrimidine phosphate (HMP-P) moiety of thiamine from aminoimidazole ribotide (AIR) in a radical S-adenosyl-L-methionine (SAM)-dependent reaction. In Campylobacter jejuni subsp. jejuni serotype O:6 (strain 81116 / NCTC 11828), this protein is Phosphomethylpyrimidine synthase.